A 174-amino-acid chain; its full sequence is Transcription antitermination protein NusB (174 aa).

The interval 1 to 28 (MVEPKKPFMRKPPPKTGDKKPGDRKANR) is disordered. Over residues 16 to 25 (TGDKKPGDRK) the composition is skewed to basic and acidic residues.

It belongs to the NusB family.

In terms of biological role, involved in transcription antitermination. Required for transcription of ribosomal RNA (rRNA) genes. Binds specifically to the boxA antiterminator sequence of the ribosomal RNA (rrn) operons. The protein is Transcription antitermination protein NusB of Rhodopseudomonas palustris (strain BisB5).